A 481-amino-acid chain; its full sequence is Beta-1,3-glucan-binding protein (481 aa).

Residues 1-18 (RCARVCAVLFLFIQISYG) form the signal peptide. Residues 20–120 (YQVPQVTVQA…LSFTVSALED (101 aa)) form the CBM39 domain. Asn-110 carries an N-linked (GlcNAc...) asparagine glycan. Positions 124-481 (TGTGTDPVPT…LVDYVKVVAL (358 aa)) constitute a GH16 domain.

Belongs to the insect beta-1,3-glucan binding protein family.

It localises to the secreted. In terms of biological role, involved in the recognition of invading microorganisms. Binds specifically to beta-1,3-glucan and activates the phenoloxidase cascade. This is Beta-1,3-glucan-binding protein from Hyphantria cunea (Fall webworm moth).